The following is a 258-amino-acid chain: tRNA pseudouridine synthase A (258 aa).

The active-site Nucleophile is the aspartate 54. Residue tyrosine 112 participates in substrate binding.

Belongs to the tRNA pseudouridine synthase TruA family. Homodimer.

The catalysed reaction is uridine(38/39/40) in tRNA = pseudouridine(38/39/40) in tRNA. Functionally, formation of pseudouridine at positions 38, 39 and 40 in the anticodon stem and loop of transfer RNAs. This Geobacillus kaustophilus (strain HTA426) protein is tRNA pseudouridine synthase A.